A 1355-amino-acid chain; its full sequence is NACHT, LRR and PYD domains-containing protein 1 homolog (1355 aa).

One can recognise an NACHT domain in the interval Lys-257–Cys-458. An ATP-binding site is contributed by Gly-263 to Ser-270. The tract at residues Asp-977–Phe-1109 is ZU5. An FIIND domain is found at Asp-977 to Ser-1252. The UPA stretch occupies residues Ser-1110–Ser-1252. One can recognise a CARD domain in the interval Leu-1278 to Asp-1354.

Belongs to the NLRP family. In terms of assembly, interacts with the C-terminal part of nlrp1 (NACHT, LRR and PYD domains-containing protein 1, C-terminus) in absence of pathogens and other damage-associated signals. Interacts with the N-terminal part of nlrp1 (NACHT, LRR and PYD domains-containing protein 1, N-terminus) in absence of pathogens and other damage-associated signals. Homomultimer; forms the nlrp1 inflammasome polymeric complex, a filament composed of homopolymers of this form in response to pathogens and other damage-associated signals. The nlrp1 inflammasome polymeric complex associates with pycard/asc. Interacts (via CARD domain) with pycard/asc (via CARD domain); leading to pro-inflammatory caspases (caspa and/or caspb) recruitment. Pro-caspase-a and pro-caspase-b filament formation increases local enzyme concentration, resulting in trans-autocleavage and activation. Active caspa and caspb then processes il1b and il18 precursors, leading to the release of mature cytokines in the extracellular milieu and inflammatory response. Autocatalytically cleaved. Autocatalytic cleavage in FIIND region occurs constitutively, prior to activation signals, and is required for inflammasome activity (IL1B release), possibly by facilitating pro-inflammatory caspases (caspa and/or caspb) binding. Both N- and C-terminal parts remain associated non-covalently. Post-translationally, ubiquitinated in response to pathogen-associated signals, leading to its degradation by the proteasome and subsequent release of the cleaved C-terminal part of the protein (NACHT, LRR and PYD domains-containing protein 1, C-terminus), which polymerizes and forms the nlrp1 inflammasome. Expressed in adult spleen, head kidney, gill and skin and also in the embryo.

It is found in the cytoplasm. It localises to the inflammasome. With respect to regulation, nlrp1 inflammasome is activated by pathogens and other damage-associated signals: activation promotes ubiquitination and degradation of the N-terminal part, releasing the cleaved C-terminal part of the protein (NACHT, LRR and PYD domains-containing protein 1, C-terminus), which polymerizes and forms the nlrp1 inflammasome. Functionally, acts as the sensor component of the nlrp1 inflammasome, which mediates inflammasome activation in response to various pathogen-associated signals, leading to subsequent pyroptosis. Inflammasomes are supramolecular complexes that assemble in the cytosol in response to pathogens and other damage-associated signals and play critical roles in innate immunity and inflammation. Acts as a recognition receptor (PRR): recognizes specific pathogens and other damage-associated signals, and mediates the formation of the inflammasome polymeric complex. In response to pathogen-associated signals, the N-terminal part of nlrp1 is degraded by the proteasome, releasing the cleaved C-terminal part of the protein (NACHT, LRR and PYD domains-containing protein 1, C-terminus), which polymerizes to initiate the formation of the inflammasome complex: the inflammasome recruits and activate pro-inflammatory caspases (caspa and/or caspb), leading to pyroptosis. In terms of biological role, constitutes the precursor of the nlrp1 inflammasome, which mediates autoproteolytic processing within the FIIND domain to generate the N-terminal and C-terminal parts, which are associated non-covalently in absence of pathogens and other damage-associated signals. Its function is as follows. Regulatory part that prevents formation of the nlrp1 inflammasome: in absence of pathogens and other damage-associated signals, interacts with the C-terminal part of nlrp1 (NACHT, LRR and PYD domains-containing protein 1, C-terminus), preventing activation of the nlrp1 inflammasome. In response to pathogen-associated signals, this part is ubiquitinated and degraded by the proteasome, releasing the cleaved C-terminal part of the protein, which polymerizes and forms the nlrp1 inflammasome. Constitutes the active part of the nlrp1 inflammasome. In absence of pathogens and other damage-associated signals, interacts with the N-terminal part of nlrp1 (NACHT, LRR and PYD domains-containing protein 1, N-terminus), preventing activation of the nlrp1 inflammasome. In response to pathogen-associated signals, the N-terminal part of nlrp1 is degraded by the proteasome, releasing this form, which polymerizes to form the nlrp1 inflammasome complex: the nlrp1 inflammasome complex then directly recruits and activates pro-inflammatory caspases (caspa and/or caspb) activation, leading to subsequent pyroptosis. This is NACHT, LRR and PYD domains-containing protein 1 homolog from Danio rerio (Zebrafish).